The following is a 221-amino-acid chain: Transcription antitermination protein NusB (221 aa).

It belongs to the NusB family.

In terms of biological role, involved in transcription antitermination. Required for transcription of ribosomal RNA (rRNA) genes. Binds specifically to the boxA antiterminator sequence of the ribosomal RNA (rrn) operons. The chain is Transcription antitermination protein NusB from Synechocystis sp. (strain ATCC 27184 / PCC 6803 / Kazusa).